The sequence spans 387 residues: Protein-glutamate methylesterase/protein-glutamine glutaminase 2 (387 aa).

A Response regulatory domain is found at 4 to 121 (KVLVVDDSGF…SRNPQKVKQL (118 aa)). Aspartate 55 bears the 4-aspartylphosphate mark. Residues 148 to 183 (AAPAAPTSSSRAPAPTTAPARAVPTRTAAPATAPAA) are compositionally biased toward low complexity. The tract at residues 148–199 (AAPAAPTSSSRAPAPTTAPARAVPTRTAAPATAPAAHAHHAPAHPTTSGTPK) is disordered. The 193-residue stretch at 192 to 384 (PTTSGTPKRK…LDDIGRHLVE (193 aa)) folds into the CheB-type methylesterase domain. Residues serine 211, histidine 238, and aspartate 331 contribute to the active site.

This sequence belongs to the CheB family. In terms of processing, phosphorylated by CheA. Phosphorylation of the N-terminal regulatory domain activates the methylesterase activity.

The protein resides in the cytoplasm. The enzyme catalyses [protein]-L-glutamate 5-O-methyl ester + H2O = L-glutamyl-[protein] + methanol + H(+). It catalyses the reaction L-glutaminyl-[protein] + H2O = L-glutamyl-[protein] + NH4(+). Involved in chemotaxis. Part of a chemotaxis signal transduction system that modulates chemotaxis in response to various stimuli. Catalyzes the demethylation of specific methylglutamate residues introduced into the chemoreceptors (methyl-accepting chemotaxis proteins or MCP) by CheR. Also mediates the irreversible deamidation of specific glutamine residues to glutamic acid. The polypeptide is Protein-glutamate methylesterase/protein-glutamine glutaminase 2 (Pseudomonas savastanoi pv. phaseolicola (strain 1448A / Race 6) (Pseudomonas syringae pv. phaseolicola (strain 1448A / Race 6))).